The sequence spans 154 residues: Peptide deformylase (154 aa).

2 residues coordinate Fe cation: Cys-90 and His-132. The active site involves Glu-133. His-136 contacts Fe cation.

This sequence belongs to the polypeptide deformylase family. Requires Fe(2+) as cofactor.

The enzyme catalyses N-terminal N-formyl-L-methionyl-[peptide] + H2O = N-terminal L-methionyl-[peptide] + formate. Functionally, removes the formyl group from the N-terminal Met of newly synthesized proteins. Requires at least a dipeptide for an efficient rate of reaction. N-terminal L-methionine is a prerequisite for activity but the enzyme has broad specificity at other positions. The sequence is that of Peptide deformylase from Halothermothrix orenii (strain H 168 / OCM 544 / DSM 9562).